Consider the following 207-residue polypeptide: Holliday junction branch migration complex subunit RuvA (207 aa).

The segment at 1–65 is domain I; sequence MYDYIRGVLT…ETEHVLYGFH (65 aa). The tract at residues 66–144 is domain II; it reads TRGERECFRM…DLLPLDAQIL (79 aa). The flexible linker stretch occupies residues 145–155; the sequence is ASWEPAKPSCM. The tract at residues 155 to 207 is domain III; the sequence is MEEGIQALAALGYPKSSAERMIAEAMSELPDHASVAEILPIALKKNLQGLNKI.

The protein belongs to the RuvA family. Homotetramer. Forms an RuvA(8)-RuvB(12)-Holliday junction (HJ) complex. HJ DNA is sandwiched between 2 RuvA tetramers; dsDNA enters through RuvA and exits via RuvB. An RuvB hexamer assembles on each DNA strand where it exits the tetramer. Each RuvB hexamer is contacted by two RuvA subunits (via domain III) on 2 adjacent RuvB subunits; this complex drives branch migration. In the full resolvosome a probable DNA-RuvA(4)-RuvB(12)-RuvC(2) complex forms which resolves the HJ.

It is found in the cytoplasm. Functionally, the RuvA-RuvB-RuvC complex processes Holliday junction (HJ) DNA during genetic recombination and DNA repair, while the RuvA-RuvB complex plays an important role in the rescue of blocked DNA replication forks via replication fork reversal (RFR). RuvA specifically binds to HJ cruciform DNA, conferring on it an open structure. The RuvB hexamer acts as an ATP-dependent pump, pulling dsDNA into and through the RuvAB complex. HJ branch migration allows RuvC to scan DNA until it finds its consensus sequence, where it cleaves and resolves the cruciform DNA. The protein is Holliday junction branch migration complex subunit RuvA of Chlamydia abortus (strain DSM 27085 / S26/3) (Chlamydophila abortus).